The chain runs to 1193 residues: Falcilysin (1193 aa).

Zn(2+) is bound at residue His129. Glu132 functions as the Proton acceptor in the catalytic mechanism. 2 residues coordinate Zn(2+): His133 and Glu243. Positions 376–404 are disordered; that stretch reads DKTNNHNNNHSNNQSSENNGYSNGSHSSD. The span at 380–394 shows a compositional bias: low complexity; the sequence is NHNNNHSNNQSSENN. The span at 395-404 shows a compositional bias: polar residues; that stretch reads GYSNGSHSSD. The stretch at 583–619 forms a coiled coil; sequence LLEGDENYAQEQENLEKQELKKRIENFNEQEKEQVIK.

Belongs to the peptidase M16 family. Monomer. Component of the hemozoin formation complex (HFC) composed of falcipains FP2A and/or FP2B, plasmepsins PMII, PMIII/HAP and PMIV, heme detoxifying protein HDP and falcilysin FLN. The HFC complex is involved in hemoglobin degradation and detoxification of heme in the food vacuole during the asexual blood stage. Requires Zn(2+) as cofactor. Post-translationally, does not require processing for targeting to the food vacuole or maturation.

It localises to the vacuole membrane. The protein localises to the plastid. It is found in the apicoplast. Its subcellular location is the vesicle. In the food vacuole, acts downstream of proteases plasmepsins PMI and PMII and falcipains during the catabolism of host hemoglobin by cleaving peptide fragments of alpha and beta hemoglobin subunits generated by PMI and PMII and falcipains. In the apicoplast, degrades apicoplast transit peptides after their cleavage. Prefers bulky hydrophobic amino acids in the P1' position at both acidic and neutral pH. At P2', prefers hydrophobic residues at acidic pH; at neutral pH, these same residues are abundant but prefers Arg. At P3', prefers hydrophobic residues, especially Met, at both pH conditions. At P4' and P5', prefers acidic residues at acidic pH, however, at neutral pH, the enzyme is less selective at these positions. The optimal site cleavage at acidic pH is YNEHS-|-FFMEE and, at neutral pH, MKRHS-|-FRMRG. The sequence is that of Falcilysin from Plasmodium falciparum (isolate 3D7).